Here is a 414-residue protein sequence, read N- to C-terminus: Serine--tRNA ligase (414 aa).

230–232 (TSE) lines the L-serine pocket. 261–263 (RQE) provides a ligand contact to ATP. Glutamate 284 is an L-serine binding site. 348-351 (EISS) is an ATP binding site. Serine 382 is a binding site for L-serine.

It belongs to the class-II aminoacyl-tRNA synthetase family. Type-1 seryl-tRNA synthetase subfamily. As to quaternary structure, homodimer. The tRNA molecule binds across the dimer.

It localises to the cytoplasm. It carries out the reaction tRNA(Ser) + L-serine + ATP = L-seryl-tRNA(Ser) + AMP + diphosphate + H(+). The enzyme catalyses tRNA(Sec) + L-serine + ATP = L-seryl-tRNA(Sec) + AMP + diphosphate + H(+). Its pathway is aminoacyl-tRNA biosynthesis; selenocysteinyl-tRNA(Sec) biosynthesis; L-seryl-tRNA(Sec) from L-serine and tRNA(Sec): step 1/1. Catalyzes the attachment of serine to tRNA(Ser). Is also able to aminoacylate tRNA(Sec) with serine, to form the misacylated tRNA L-seryl-tRNA(Sec), which will be further converted into selenocysteinyl-tRNA(Sec). This chain is Serine--tRNA ligase, found in Campylobacter concisus (strain 13826).